A 641-amino-acid polypeptide reads, in one-letter code: Pre-mRNA-processing factor 39 (641 aa).

Residues Met-1–Pro-50 are disordered. A compositionally biased stretch (low complexity) spans Glu-10–Ala-23. Pro residues predominate over residues Thr-24–Pro-50. HAT repeat units lie at residues Pro-50 to Gln-82, Asn-84 to Lys-116, Asn-118 to Glu-150, Glu-158 to Glu-193, Asn-304 to Glu-336, Gly-338 to Asn-370, and Ser-372 to Asn-407.

This sequence belongs to the PRP39 family.

It localises to the nucleus. Functionally, involved in pre-mRNA splicing. This is Pre-mRNA-processing factor 39 (prpf39) from Xenopus laevis (African clawed frog).